The primary structure comprises 165 residues: UPF0303 protein Bcep1808_1522 (165 aa).

The protein belongs to the UPF0303 family.

The polypeptide is UPF0303 protein Bcep1808_1522 (Burkholderia vietnamiensis (strain G4 / LMG 22486) (Burkholderia cepacia (strain R1808))).